The primary structure comprises 569 residues: 3-(3-hydroxy-phenyl)propionate/3-hydroxycinnamic acid hydroxylase (569 aa).

Residues 8–37 and 273–283 contribute to the FAD site; these read DVVI…VVDE and FREGRLMLAGD.

It belongs to the PheA/TfdB FAD monooxygenase family. The cofactor is FAD.

The enzyme catalyses 3-(3-hydroxyphenyl)propanoate + NADH + O2 + H(+) = 3-(2,3-dihydroxyphenyl)propanoate + NAD(+) + H2O. It catalyses the reaction (2E)-3-(3-hydroxyphenyl)prop-2-enoate + NADH + O2 + H(+) = (2E)-3-(2,3-dihydroxyphenyl)prop-2-enoate + NAD(+) + H2O. Its pathway is aromatic compound metabolism; 3-phenylpropanoate degradation. Functionally, catalyzes the insertion of one atom of molecular oxygen into position 2 of the phenyl ring of 3-(3-hydroxyphenyl)propionate (3-HPP) and hydroxycinnamic acid (3HCI). The chain is 3-(3-hydroxy-phenyl)propionate/3-hydroxycinnamic acid hydroxylase from Mycolicibacterium gilvum (strain PYR-GCK) (Mycobacterium gilvum (strain PYR-GCK)).